Reading from the N-terminus, the 154-residue chain is Large ribosomal subunit protein uL13 (154 aa).

Belongs to the universal ribosomal protein uL13 family. As to quaternary structure, part of the 50S ribosomal subunit.

Its function is as follows. This protein is one of the early assembly proteins of the 50S ribosomal subunit, although it is not seen to bind rRNA by itself. It is important during the early stages of 50S assembly. The protein is Large ribosomal subunit protein uL13 of Borrelia garinii subsp. bavariensis (strain ATCC BAA-2496 / DSM 23469 / PBi) (Borreliella bavariensis).